The chain runs to 173 residues: Phosphopantetheine adenylyltransferase (173 aa).

Ser-9 serves as a coordination point for substrate. ATP contacts are provided by residues 9–10 and His-17; that span reads SF. Residues Lys-41, Thr-73, and Arg-87 each contribute to the substrate site. ATP-binding positions include 88–90, Glu-98, and 123–129; these read GVR and YQYLSSS.

This sequence belongs to the bacterial CoaD family. Homohexamer. It depends on Mg(2+) as a cofactor.

The protein resides in the cytoplasm. The catalysed reaction is (R)-4'-phosphopantetheine + ATP + H(+) = 3'-dephospho-CoA + diphosphate. It participates in cofactor biosynthesis; coenzyme A biosynthesis; CoA from (R)-pantothenate: step 4/5. Its function is as follows. Reversibly transfers an adenylyl group from ATP to 4'-phosphopantetheine, yielding dephospho-CoA (dPCoA) and pyrophosphate. This Limosilactobacillus fermentum (strain NBRC 3956 / LMG 18251) (Lactobacillus fermentum) protein is Phosphopantetheine adenylyltransferase.